The chain runs to 457 residues: Argininosuccinate lyase (457 aa).

This sequence belongs to the lyase 1 family. Argininosuccinate lyase subfamily.

The protein resides in the cytoplasm. The catalysed reaction is 2-(N(omega)-L-arginino)succinate = fumarate + L-arginine. It functions in the pathway amino-acid biosynthesis; L-arginine biosynthesis; L-arginine from L-ornithine and carbamoyl phosphate: step 3/3. In Escherichia coli O9:H4 (strain HS), this protein is Argininosuccinate lyase.